Reading from the N-terminus, the 62-residue chain is Small ribosomal subunit protein uS14 (62 aa).

4 residues coordinate Zn(2+): C25, C28, C41, and C44.

This sequence belongs to the universal ribosomal protein uS14 family. Zinc-binding uS14 subfamily. In terms of assembly, part of the 30S ribosomal subunit. Contacts proteins S3 and S10. The cofactor is Zn(2+).

Its function is as follows. Binds 16S rRNA, required for the assembly of 30S particles and may also be responsible for determining the conformation of the 16S rRNA at the A site. The protein is Small ribosomal subunit protein uS14 of Persephonella marina (strain DSM 14350 / EX-H1).